A 307-amino-acid chain; its full sequence is Agmatinase (307 aa).

Mn(2+) is bound by residues histidine 126, aspartate 149, histidine 151, aspartate 153, aspartate 230, and aspartate 232.

Belongs to the arginase family. Agmatinase subfamily. Mn(2+) serves as cofactor.

It catalyses the reaction agmatine + H2O = urea + putrescine. It functions in the pathway amine and polyamine biosynthesis; putrescine biosynthesis via agmatine pathway; putrescine from agmatine: step 1/1. Functionally, catalyzes the formation of putrescine from agmatine. The chain is Agmatinase from Sodalis glossinidius (strain morsitans).